Reading from the N-terminus, the 309-residue chain is Aspartate carbamoyltransferase catalytic subunit (309 aa).

Carbamoyl phosphate is bound by residues arginine 55 and threonine 56. Residue lysine 85 coordinates L-aspartate. Carbamoyl phosphate contacts are provided by arginine 106, histidine 135, and glutamine 138. 2 residues coordinate L-aspartate: arginine 168 and arginine 230. The carbamoyl phosphate site is built by leucine 268 and proline 269.

Belongs to the aspartate/ornithine carbamoyltransferase superfamily. ATCase family. As to quaternary structure, heterododecamer (2C3:3R2) of six catalytic PyrB chains organized as two trimers (C3), and six regulatory PyrI chains organized as three dimers (R2).

It carries out the reaction carbamoyl phosphate + L-aspartate = N-carbamoyl-L-aspartate + phosphate + H(+). The protein operates within pyrimidine metabolism; UMP biosynthesis via de novo pathway; (S)-dihydroorotate from bicarbonate: step 2/3. Catalyzes the condensation of carbamoyl phosphate and aspartate to form carbamoyl aspartate and inorganic phosphate, the committed step in the de novo pyrimidine nucleotide biosynthesis pathway. In Vibrio campbellii (strain ATCC BAA-1116), this protein is Aspartate carbamoyltransferase catalytic subunit.